Reading from the N-terminus, the 327-residue chain is Pyruvate dehydrogenase E1 component subunit beta (327 aa).

Glu60 contributes to the thiamine diphosphate binding site. Residues Ile113, Ala161, Ile162, and Asn166 each contribute to the K(+) site.

Heterodimer of an alpha and a beta chain. It depends on thiamine diphosphate as a cofactor.

Its subcellular location is the plastid. The protein localises to the chloroplast. The enzyme catalyses N(6)-[(R)-lipoyl]-L-lysyl-[protein] + pyruvate + H(+) = N(6)-[(R)-S(8)-acetyldihydrolipoyl]-L-lysyl-[protein] + CO2. Its function is as follows. The pyruvate dehydrogenase complex catalyzes the overall conversion of pyruvate to acetyl-CoA and CO(2). It contains multiple copies of three enzymatic components: pyruvate dehydrogenase (E1), dihydrolipoamide acetyltransferase (E2) and lipoamide dehydrogenase (E3). The sequence is that of Pyruvate dehydrogenase E1 component subunit beta (pdhB) from Mesostigma viride (Green alga).